The sequence spans 79 residues: uncharacterized protein (79 aa).

The protein belongs to the BolA/IbaG family.

This is an uncharacterized protein from Buchnera aphidicola subsp. Baizongia pistaciae (strain Bp).